Reading from the N-terminus, the 658-residue chain is Translation factor GUF1, mitochondrial (658 aa).

Positions 45–231 (ENYRNFSIVA…AVIDRIPPPT (187 aa)) constitute a tr-type G domain. GTP-binding positions include 54 to 61 (AHIDHGKS), 123 to 127 (DTPGH), and 177 to 180 (NKID).

This sequence belongs to the TRAFAC class translation factor GTPase superfamily. Classic translation factor GTPase family. LepA subfamily.

It localises to the mitochondrion inner membrane. The enzyme catalyses GTP + H2O = GDP + phosphate + H(+). Functionally, promotes mitochondrial protein synthesis. May act as a fidelity factor of the translation reaction, by catalyzing a one-codon backward translocation of tRNAs on improperly translocated ribosomes. Binds to mitochondrial ribosomes in a GTP-dependent manner. The sequence is that of Translation factor GUF1, mitochondrial from Vanderwaltozyma polyspora (strain ATCC 22028 / DSM 70294 / BCRC 21397 / CBS 2163 / NBRC 10782 / NRRL Y-8283 / UCD 57-17) (Kluyveromyces polysporus).